The sequence spans 518 residues: Mitochondrial 2-methylisocitrate lyase (518 aa).

It belongs to the isocitrate lyase/PEP mutase superfamily. Isocitrate lyase family.

Its subcellular location is the mitochondrion matrix. The protein localises to the cytoplasm. The enzyme catalyses (2S,3R)-3-hydroxybutane-1,2,3-tricarboxylate = pyruvate + succinate. The protein operates within organic acid metabolism; propanoate degradation. Its function is as follows. Catalyzes the formation of pyruvate and succinate from 2-methylisocitrate during the metabolism of endogenous propionyl-CoA. Does not act on isocitrate. The protein is Mitochondrial 2-methylisocitrate lyase (icl2) of Schizosaccharomyces pombe (strain 972 / ATCC 24843) (Fission yeast).